The following is a 208-amino-acid chain: Small ribosomal subunit protein uS4 (208 aa).

Positions 98 to 161 (QRLDNVVYRM…KTNPQIVRAI (64 aa)) constitute an S4 RNA-binding domain.

This sequence belongs to the universal ribosomal protein uS4 family. Part of the 30S ribosomal subunit. Contacts protein S5. The interaction surface between S4 and S5 is involved in control of translational fidelity.

One of the primary rRNA binding proteins, it binds directly to 16S rRNA where it nucleates assembly of the body of the 30S subunit. Functionally, with S5 and S12 plays an important role in translational accuracy. This chain is Small ribosomal subunit protein uS4, found in Campylobacter fetus subsp. fetus (strain 82-40).